We begin with the raw amino-acid sequence, 325 residues long: E3 ubiquitin-protein ligase EL5 (325 aa).

Residues 1–29 (MVRGVEQGGPAMDESSSSSSPSPVSAPAG) form a disordered region. The span at 15-28 (SSSSSSPSPVSAPA) shows a compositional bias: low complexity. Residues 38 to 58 (IATVAAVLIVFAALTLAFVLL) traverse the membrane as a helical segment. Residues 70–105 (TTTSTSGRGRRPRPRRRSGSGGDGGTGGGVDPEVLR) form a disordered region. Positions 77–87 (RGRRPRPRRRS) are enriched in basic residues. The segment covering 88 to 99 (GSGGDGGTGGGV) has biased composition (gly residues). An RING-type; atypical zinc finger spans residues 134-176 (CAVCLAELEDGEEARFLPRCGHGFHAECVDMWLGSHSTCPLCR). Disordered stretches follow at residues 267 to 289 (GAAGSTSSCSCATGGDNDDGDVE) and 303 to 325 (AATPARPPEAEAGARTAAAHVRN). Positions 268 to 281 (AAGSTSSCSCATGG) are enriched in low complexity.

It localises to the cell membrane. It carries out the reaction S-ubiquitinyl-[E2 ubiquitin-conjugating enzyme]-L-cysteine + [acceptor protein]-L-lysine = [E2 ubiquitin-conjugating enzyme]-L-cysteine + N(6)-ubiquitinyl-[acceptor protein]-L-lysine.. Its pathway is protein modification; protein ubiquitination. Its function is as follows. Functions as an E3 ubiquitin-protein ligase in cooperation with the E2 ubiquitin conjugating enzymes UBC5A and UBC5B. Involved in root development. Required for the maintenance of cell viability after the initiation of root primordial formation. May mediate the degradation of cytotoxic proteins produced in root cells after the actions of auxin, cytokinin and jasmonic acid. Mediates 'Lys-48'-linked polyubiquitination of MBP in vitro. The polypeptide is E3 ubiquitin-protein ligase EL5 (EL5.1) (Oryza sativa subsp. japonica (Rice)).